Consider the following 277-residue polypeptide: Large ribosomal subunit protein uL2 (277 aa).

Disordered stretches follow at residues 36-55 and 213-277; these read PLPK…RHHG and WKGI…RKKK.

The protein belongs to the universal ribosomal protein uL2 family. As to quaternary structure, part of the 50S ribosomal subunit. Forms a bridge to the 30S subunit in the 70S ribosome.

One of the primary rRNA binding proteins. Required for association of the 30S and 50S subunits to form the 70S ribosome, for tRNA binding and peptide bond formation. It has been suggested to have peptidyltransferase activity; this is somewhat controversial. Makes several contacts with the 16S rRNA in the 70S ribosome. This Staphylococcus saprophyticus subsp. saprophyticus (strain ATCC 15305 / DSM 20229 / NCIMB 8711 / NCTC 7292 / S-41) protein is Large ribosomal subunit protein uL2.